Consider the following 416-residue polypeptide: Adenylosuccinate synthetase (416 aa).

Residues 13–19 (GDEGKGK) and 41–43 (GHT) contribute to the GTP site. D14 functions as the Proton acceptor in the catalytic mechanism. Residues D14 and G41 each coordinate Mg(2+). IMP-binding positions include 14–17 (DEGK), 39–42 (NAGH), T126, R140, Q220, T235, and R299. Residue H42 is the Proton donor of the active site. 295–301 (TTTGRKR) lines the substrate pocket. Residues R301, 327-329 (KLD), and 405-407 (STS) each bind GTP.

It belongs to the adenylosuccinate synthetase family. Homodimer. Mg(2+) serves as cofactor.

Its subcellular location is the cytoplasm. The enzyme catalyses IMP + L-aspartate + GTP = N(6)-(1,2-dicarboxyethyl)-AMP + GDP + phosphate + 2 H(+). Its pathway is purine metabolism; AMP biosynthesis via de novo pathway; AMP from IMP: step 1/2. Functionally, plays an important role in the de novo pathway of purine nucleotide biosynthesis. Catalyzes the first committed step in the biosynthesis of AMP from IMP. The polypeptide is Adenylosuccinate synthetase (Campylobacter hominis (strain ATCC BAA-381 / DSM 21671 / CCUG 45161 / LMG 19568 / NCTC 13146 / CH001A)).